The chain runs to 376 residues: DNA-directed RNA polymerase subunit alpha (376 aa).

The alpha N-terminal domain (alpha-NTD) stretch occupies residues 1–259 (MSDCSQNLLY…KHFSIFEKMD (259 aa)). The tract at residues 276-376 (KDDILHKLVL…DKIRSKNGKG (101 aa)) is alpha C-terminal domain (alpha-CTD).

Belongs to the RNA polymerase alpha chain family. Homodimer. The RNAP catalytic core consists of 2 alpha, 1 beta, 1 beta' and 1 omega subunit. When a sigma factor is associated with the core the holoenzyme is formed, which can initiate transcription.

The enzyme catalyses RNA(n) + a ribonucleoside 5'-triphosphate = RNA(n+1) + diphosphate. In terms of biological role, DNA-dependent RNA polymerase catalyzes the transcription of DNA into RNA using the four ribonucleoside triphosphates as substrates. The protein is DNA-directed RNA polymerase subunit alpha of Chlamydia abortus (strain DSM 27085 / S26/3) (Chlamydophila abortus).